A 169-amino-acid chain; its full sequence is MKPSSSNSRSKGHAKARRKTREELDQEARDRKRQKKRRGHAPGSRAAGGNTSSGSKGQNAPKDPRIGSKTPIPLGVTEKVTKQHKPKSEKPMLSPQAELELLETDERLDALLERLEAGETLSAEEQSWVDAKLDRIDELMQKLGLSYDDDEEEEEDEKQEDMMRLLRGN.

2 disordered regions span residues 1 to 100 and 144 to 169; these read MKPS…AELE and GLSYDDDEEEEEDEKQEDMMRLLRGN. Basic residues predominate over residues 10–19; that stretch reads SKGHAKARRK. Over residues 20-30 the composition is skewed to basic and acidic residues; sequence TREELDQEARD. A compositionally biased stretch (basic residues) spans 31–40; sequence RKRQKKRRGH. A compositionally biased stretch (polar residues) spans 49-58; the sequence is GNTSSGSKGQ. Positions 147-159 are enriched in acidic residues; sequence YDDDEEEEEDEKQ. Over residues 160 to 169 the composition is skewed to basic and acidic residues; it reads EDMMRLLRGN.

Belongs to the YihI family. As to quaternary structure, interacts with Der.

In terms of biological role, a GTPase-activating protein (GAP) that modifies Der/EngA GTPase function. May play a role in ribosome biogenesis. This is Der GTPase-activating protein YihI from Escherichia coli (strain SMS-3-5 / SECEC).